A 616-amino-acid polypeptide reads, in one-letter code: Dihydroxy-acid dehydratase (616 aa).

Aspartate 81 is a Mg(2+) binding site. Residue cysteine 122 coordinates [2Fe-2S] cluster. The Mg(2+) site is built by aspartate 123 and lysine 124. The residue at position 124 (lysine 124) is an N6-carboxylysine. Position 195 (cysteine 195) interacts with [2Fe-2S] cluster. Glutamate 491 is a Mg(2+) binding site. Residue serine 517 is the Proton acceptor of the active site.

Belongs to the IlvD/Edd family. As to quaternary structure, homodimer. The cofactor is [2Fe-2S] cluster. It depends on Mg(2+) as a cofactor.

It carries out the reaction (2R)-2,3-dihydroxy-3-methylbutanoate = 3-methyl-2-oxobutanoate + H2O. It catalyses the reaction (2R,3R)-2,3-dihydroxy-3-methylpentanoate = (S)-3-methyl-2-oxopentanoate + H2O. Its pathway is amino-acid biosynthesis; L-isoleucine biosynthesis; L-isoleucine from 2-oxobutanoate: step 3/4. The protein operates within amino-acid biosynthesis; L-valine biosynthesis; L-valine from pyruvate: step 3/4. Its function is as follows. Functions in the biosynthesis of branched-chain amino acids. Catalyzes the dehydration of (2R,3R)-2,3-dihydroxy-3-methylpentanoate (2,3-dihydroxy-3-methylvalerate) into 2-oxo-3-methylpentanoate (2-oxo-3-methylvalerate) and of (2R)-2,3-dihydroxy-3-methylbutanoate (2,3-dihydroxyisovalerate) into 2-oxo-3-methylbutanoate (2-oxoisovalerate), the penultimate precursor to L-isoleucine and L-valine, respectively. The polypeptide is Dihydroxy-acid dehydratase (Methylobacillus flagellatus (strain ATCC 51484 / DSM 6875 / VKM B-1610 / KT)).